Reading from the N-terminus, the 376-residue chain is Succinyl-diaminopimelate desuccinylase (376 aa).

His-66 serves as a coordination point for Zn(2+). Asp-68 is a catalytic residue. Residue Asp-99 coordinates Zn(2+). The Proton acceptor role is filled by Glu-133. Residues Glu-134, Glu-162, and His-348 each coordinate Zn(2+).

Belongs to the peptidase M20A family. DapE subfamily. In terms of assembly, homodimer. The cofactor is Zn(2+). Co(2+) serves as cofactor.

The catalysed reaction is N-succinyl-(2S,6S)-2,6-diaminopimelate + H2O = (2S,6S)-2,6-diaminopimelate + succinate. Its pathway is amino-acid biosynthesis; L-lysine biosynthesis via DAP pathway; LL-2,6-diaminopimelate from (S)-tetrahydrodipicolinate (succinylase route): step 3/3. Its function is as follows. Catalyzes the hydrolysis of N-succinyl-L,L-diaminopimelic acid (SDAP), forming succinate and LL-2,6-diaminopimelate (DAP), an intermediate involved in the bacterial biosynthesis of lysine and meso-diaminopimelic acid, an essential component of bacterial cell walls. This Nitrosococcus oceani (strain ATCC 19707 / BCRC 17464 / JCM 30415 / NCIMB 11848 / C-107) protein is Succinyl-diaminopimelate desuccinylase.